The chain runs to 458 residues: UDP-N-acetylmuramoylalanine--D-glutamate ligase (458 aa).

An ATP-binding site is contributed by 118–124 (GTNGKTT).

This sequence belongs to the MurCDEF family.

It localises to the cytoplasm. It catalyses the reaction UDP-N-acetyl-alpha-D-muramoyl-L-alanine + D-glutamate + ATP = UDP-N-acetyl-alpha-D-muramoyl-L-alanyl-D-glutamate + ADP + phosphate + H(+). Its pathway is cell wall biogenesis; peptidoglycan biosynthesis. Cell wall formation. Catalyzes the addition of glutamate to the nucleotide precursor UDP-N-acetylmuramoyl-L-alanine (UMA). This Ligilactobacillus salivarius (strain UCC118) (Lactobacillus salivarius) protein is UDP-N-acetylmuramoylalanine--D-glutamate ligase.